A 508-amino-acid polypeptide reads, in one-letter code: Ribonuclease Y (508 aa).

Residues 2–22 (IITALIAIAVGFLIGYLARKI) form a helical membrane-spanning segment. A KH domain is found at 198 to 261 (TVSVVTLPND…EVARIALEKL (64 aa)). An HD domain is found at 324 to 417 (VLKHSIEVAH…VQAADAISAA (94 aa)).

This sequence belongs to the RNase Y family.

It localises to the cell membrane. Its function is as follows. Endoribonuclease that initiates mRNA decay. The polypeptide is Ribonuclease Y (Thermoanaerobacter pseudethanolicus (strain ATCC 33223 / 39E) (Clostridium thermohydrosulfuricum)).